We begin with the raw amino-acid sequence, 322 residues long: Protein-L-isoaspartate O-methyltransferase (322 aa).

A disordered region spans residues methionine 1–proline 101. Basic and acidic residues predominate over residues glutamate 14 to glutamate 29. Composition is skewed to low complexity over residues alanine 33–alanine 51 and alanine 67–glycine 91. Residue serine 170 is part of the active site.

This sequence belongs to the methyltransferase superfamily. L-isoaspartyl/D-aspartyl protein methyltransferase family.

The protein localises to the cytoplasm. It catalyses the reaction [protein]-L-isoaspartate + S-adenosyl-L-methionine = [protein]-L-isoaspartate alpha-methyl ester + S-adenosyl-L-homocysteine. Functionally, catalyzes the methyl esterification of L-isoaspartyl residues in peptides and proteins that result from spontaneous decomposition of normal L-aspartyl and L-asparaginyl residues. It plays a role in the repair and/or degradation of damaged proteins. This Burkholderia pseudomallei (strain 668) protein is Protein-L-isoaspartate O-methyltransferase.